We begin with the raw amino-acid sequence, 474 residues long: Cysteine--tRNA ligase (474 aa).

Cysteine 34 is a Zn(2+) binding site. The 'HIGH' region motif lies at 36–46; it reads PTVYDYAHIGN. Zn(2+) is bound by residues cysteine 219, histidine 244, and glutamate 248. The 'KMSKS' region motif lies at 276–280; the sequence is KMSKS. Residue lysine 279 participates in ATP binding.

Belongs to the class-I aminoacyl-tRNA synthetase family. Monomer. Requires Zn(2+) as cofactor.

The protein resides in the cytoplasm. It catalyses the reaction tRNA(Cys) + L-cysteine + ATP = L-cysteinyl-tRNA(Cys) + AMP + diphosphate. The protein is Cysteine--tRNA ligase (cysS) of Chlamydia pneumoniae (Chlamydophila pneumoniae).